Consider the following 563-residue polypeptide: CDKN2A-interacting protein (563 aa).

N-acetylalanine is present on A2. Residues 19 to 126 form the XRN2-binding (XTBD) domain; sequence VETLRCEGET…KVKKRGISSS (108 aa). Disordered stretches follow at residues 122 to 289 and 304 to 351; these read GISS…LLGS and SSSE…PSLL. Residue S124 is modified to Phosphoserine. Over residues 147–160 the composition is skewed to basic and acidic residues; the sequence is VERDHGKKSAKTDR. 2 stretches are compositionally biased toward low complexity: residues 168 to 216 and 234 to 248; these read SSPS…SSQV and SASF…SMNS. Residue K177 forms a Glycyl lysine isopeptide (Lys-Gly) (interchain with G-Cter in SUMO1) linkage. S234 carries the phosphoserine modification. Over residues 249–262 the composition is skewed to polar residues; it reads HMTQSTDNRQQSGS. Residues 270-280 are compositionally biased toward low complexity; it reads GSSGSASQSSS. A Phosphothreonine modification is found at T340. S371 carries the post-translational modification Phosphoserine. One can recognise a DRBM domain in the interval 445–520; sequence NHGELLNAAI…SREALKLFLK (76 aa).

This sequence belongs to the CARF family. As to quaternary structure, interacts with CDKN2A/p14ARF, p53/TP53 and MDM2. Interacts with CHEK2 and MAPK3. Interacts with XRN2. May be ubiquitinated.

It is found in the nucleus. It localises to the nucleoplasm. Its function is as follows. Regulates DNA damage response and cell proliferation in a dose-dependent manner through a number of signaling pathways involved in cell proliferation, apoptosis and senescence. The protein is CDKN2A-interacting protein (Cdkn2aip) of Mus musculus (Mouse).